The primary structure comprises 624 residues: Chaperone protein HtpG (624 aa).

The segment at 1–336 (MKGQETRGFQ…SNDLPLNVSR (336 aa)) is a; substrate-binding. Positions 337–552 (EILQDSTVTR…ADEMSTQMAK (216 aa)) are b. The segment at 553–624 (LFAAAGQSVP…IRRMNQLLVS (72 aa)) is c.

Belongs to the heat shock protein 90 family. In terms of assembly, homodimer.

It is found in the cytoplasm. Its function is as follows. Molecular chaperone. Has ATPase activity. In Salmonella typhi, this protein is Chaperone protein HtpG.